A 155-amino-acid polypeptide reads, in one-letter code: UPF0266 membrane protein lin0773 (155 aa).

3 consecutive transmembrane segments (helical) span residues 8–28, 46–66, and 70–90; these read IFLF…DAVI, RWDG…NTFF, and PFST…ICFF.

This sequence belongs to the UPF0266 family.

It localises to the cell membrane. This Listeria innocua serovar 6a (strain ATCC BAA-680 / CLIP 11262) protein is UPF0266 membrane protein lin0773.